The chain runs to 77 residues: Dermatoxin-B1 (77 aa).

The first 22 residues, 1-22, serve as a signal peptide directing secretion; sequence MAFLKKSLFLVLFLGLVPLSLC. Residues 23–42 constitute a propeptide that is removed on maturation; the sequence is ESEKREGENEEEQEDDQSEE. Positions 24 to 45 are disordered; sequence SEKREGENEEEQEDDQSEEKRS. The span at 30-40 shows a compositional bias: acidic residues; it reads ENEEEQEDDQS. Glutamine amide is present on Q76.

Belongs to the frog skin active peptide (FSAP) family. Dermatoxin subfamily. In terms of tissue distribution, highest expression in skin and to a lesser extent in brain and intestine.

The protein resides in the secreted. Its subcellular location is the target cell membrane. Possesses a potent antimicrobial activity against Gram-positive bacteria B.megaterium, C.glutamicum and S.aureus and mollicutes A.laidlawii and S.melliferum. Less active against Gram-negative bacteria B.cepacia, P.aeruginosa, S.typhimurium and S.meliloti. Probably acts by disturbing membrane functions with its amphipathic structure. In Phyllomedusa bicolor (Two-colored leaf frog), this protein is Dermatoxin-B1.